The following is a 776-amino-acid chain: Microtubule-associated protein tau (776 aa).

Basic and acidic residues predominate over residues 1–26 (MAEPRQEFEVMEDHAGTYGLGDRKDQ). 2 disordered regions span residues 1 to 263 (MAEP…PAKG) and 276 to 591 (STEI…LKNV). N-acetylalanine is present on Ala-2. Residues Tyr-18 and Tyr-29 each carry the phosphotyrosine modification. A Glycyl lysine isopeptide (Lys-Gly) (interchain with G-Cter in ubiquitin) cross-link involves residue Lys-44. Ser-46 and Ser-61 each carry phosphoserine. Polar residues predominate over residues 61–71 (SETSDAKSTPT). Phosphothreonine is present on residues Thr-69, Thr-71, and Thr-111. 2 stretches are compositionally biased toward basic and acidic residues: residues 179-189 (EGGRHAPELLK) and 207-216 (GGKERPGSKE). Phosphoserine is present on Ser-214. Residues 217-228 (EVDEDRDVDESS) show a composition bias toward acidic residues. Positions 314–323 (EQAHSEEHLG) are enriched in basic and acidic residues. Low complexity predominate over residues 324 to 340 (RAAFPGAPGEGPEARGP). 2 stretches are compositionally biased toward basic and acidic residues: residues 344–356 (EDTKEADLPESSE) and 381–393 (KSKDGTGSDDKKA). Positions 440-452 (KYVSSVTPRTGSS) are enriched in polar residues. Residues 455–466 (KEMKLKGADGKT) are compositionally biased toward basic and acidic residues. The residue at position 470 (Thr-470) is a Phosphothreonine. The residue at position 472 (Arg-472) is an Omega-N-methylarginine. Lys-480 is subject to N6,N6-dimethyllysine; alternate. An N6-acetyllysine; alternate modification is found at Lys-480. Thr-486, Thr-492, and Thr-498 each carry phosphothreonine. 3 positions are modified to phosphoserine: Ser-502, Ser-526, and Ser-530. The segment covering 517–528 (RSERGEPPKSGD) has biased composition (basic and acidic residues). Residues 529–549 (RSGYSSPGSPGTPGSRSRTPS) are compositionally biased toward low complexity. Tyr-532 carries the phosphotyrosine modification. Phosphoserine is present on residues Ser-533, Ser-534, and Ser-537. Phosphothreonine is present on residues Thr-540 and Thr-547. Ser-549 is modified (phosphoserine). Thr-552 is subject to Phosphothreonine. N6-acetyllysine is present on Lys-560. Thr-566 is subject to Phosphothreonine. Residues Ser-570 and Ser-572 each carry the phosphoserine modification. 4 Tau/MAP repeats span residues 579–609 (QTAPVPMPDLKNVKSKIGSTENLKHQPGGGK), 610–640 (VQIINKKLDLSNVQSKCGSKDNIKHVPGGGS), 641–671 (VQIVYKPVDLSKVTSKCGSLGNIHHKPGGGQ), and 672–703 (VEVKSEKLDFKDRVQSKIGSLDNITHVPGGGN). Lys-589 is covalently cross-linked (Glycyl lysine isopeptide (Lys-Gly) (interchain with G-Cter in ubiquitin)). Lys-594 carries the N6-acetyllysine; alternate modification. An N6-methyllysine; alternate modification is found at Lys-594. Residue Lys-594 forms a Glycyl lysine isopeptide (Lys-Gly) (interchain with G-Cter in ubiquitin); alternate linkage. At Ser-597 the chain carries Phosphoserine. A Glycyl lysine isopeptide (Lys-Gly) (interchain with G-Cter in ubiquitin) cross-link involves residue Lys-602. Lys-616 is modified (N6-acetyllysine; alternate). Lys-616 is covalently cross-linked (Glycyl lysine isopeptide (Lys-Gly) (interchain with G-Cter in ubiquitin); alternate). Ser-620 and Ser-624 each carry phosphoserine. Lys-625 is subject to N6-acetyllysine. Ser-628 carries the phosphoserine modification. At Lys-633 the chain carries N6-acetyllysine; alternate. Lys-633 participates in a covalent cross-link: Glycyl lysine isopeptide (Lys-Gly) (interchain with G-Cter in ubiquitin); alternate. At Ser-640 the chain carries Phosphoserine. Lys-646 is subject to N6,N6-dimethyllysine; alternate. N6-acetyllysine; alternate is present on residues Lys-646, Lys-652, and Lys-656. Residues Lys-646, Lys-652, and Lys-656 each participate in a glycyl lysine isopeptide (Lys-Gly) (interchain with G-Cter in ubiquitin); alternate cross-link. Position 659 is a phosphoserine (Ser-659). An N6-acetyllysine; alternate mark is found at Lys-666, Lys-678, and Lys-682. Glycyl lysine isopeptide (Lys-Gly) (interchain with G-Cter in ubiquitin); alternate cross-links involve residues Lys-666, Lys-678, and Lys-682. Position 684 is an omega-N-methylarginine (Arg-684). Residue Ser-687 is modified to Phosphoserine. Lys-688 is covalently cross-linked (Glycyl lysine isopeptide (Lys-Gly) (interchain with G-Cter in ubiquitin)). Phosphoserine is present on Ser-691. Lys-704 bears the N6-acetyllysine; alternate mark. Residue Lys-704 forms a Glycyl lysine isopeptide (Lys-Gly) (interchain with G-Cter in ubiquitin); alternate linkage. Lys-710 participates in a covalent cross-link: Glycyl lysine isopeptide (Lys-Gly) (interchain with G-Cter in ubiquitin). Lys-720 carries the N6-acetyllysine; alternate modification. A Glycyl lysine isopeptide (Lys-Gly) (interchain with G-Cter in ubiquitin); alternate cross-link involves residue Lys-720. At Tyr-729 the chain carries Phosphotyrosine. 2 positions are modified to phosphoserine: Ser-731 and Ser-735. The disordered stretch occupies residues 733–752 (VVSGDTSPRHLSNVSSTGSI). Residues 736-751 (GDTSPRHLSNVSSTGS) are compositionally biased toward polar residues. Phosphothreonine is present on Thr-738. Phosphoserine is present on residues Ser-739, Ser-744, Ser-751, and Ser-757. Thr-762 is modified (phosphothreonine).

Interacts with MARK1, MARK2, MARK3 and MARK4. Interacts with SQSTM1 when polyubiquitinated. Interacts with PSMC2 through SQSTM1. Interacts with FKBP4. Binds to CSNK1D. Interacts with SGK1. Interacts with EPM2A; the interaction dephosphorylates MAPT at Ser-396. Interacts with PIN1. Interacts with LRRK2. Interacts with LRP1, leading to endocytosis; this interaction is reduced in the presence of LRPAP1/RAP. In terms of processing, polyubiquitinated. Requires functional TRAF6 and may provoke SQSTM1-dependent degradation by the proteasome. Post-translationally, phosphorylation at various serine and threonine residues in S-P or T-P motifs by proline-directed protein kinases (PDPK1, CDK1, CDK5, GSK3, MAPK) (a few sites per protein in interphase, more in mitosis), and at serine residues in K-X-G-S motifs by MAP/microtubule affinity-regulating kinase (MARK1, MARK2, MARK3 or MARK4), causing detachment from microtubules, and their disassembly. Phosphorylation at Ser-597 by BRSK1 and BRSK2 in neurons affects ability to bind microtubules and plays a role in neuron polarization. Phosphorylation at Ser-214 by SGK1 mediates microtubule depolymerization and neurite formation in hippocampal neurons. Phosphorylated by PHK. Dephosphorylation at several serine and threonine residues by the serine/threonine phosphatase PPP5C.

It is found in the cytoplasm. Its subcellular location is the cytosol. The protein localises to the cell membrane. It localises to the cytoskeleton. The protein resides in the cell projection. It is found in the axon. Its subcellular location is the dendrite. In terms of biological role, promotes microtubule assembly and stability, and might be involved in the establishment and maintenance of neuronal polarity. The C-terminus binds axonal microtubules while the N-terminus binds neural plasma membrane components, suggesting that tau functions as a linker protein between both. Axonal polarity is predetermined by tau localization (in the neuronal cell) in the domain of the cell body defined by the centrosome. The short isoforms allow plasticity of the cytoskeleton whereas the longer isoforms may preferentially play a role in its stabilization. The sequence is that of Microtubule-associated protein tau (MAPT) from Gorilla gorilla gorilla (Western lowland gorilla).